The primary structure comprises 176 residues: ATP synthase subunit b, chloroplastic (176 aa).

A helical membrane pass occupies residues leucine 19 to leucine 39.

The protein belongs to the ATPase B chain family. As to quaternary structure, F-type ATPases have 2 components, F(1) - the catalytic core - and F(0) - the membrane proton channel. F(1) has five subunits: alpha(3), beta(3), gamma(1), delta(1), epsilon(1). F(0) has four main subunits: a(1), b(1), b'(1) and c(10-14). The alpha and beta chains form an alternating ring which encloses part of the gamma chain. F(1) is attached to F(0) by a central stalk formed by the gamma and epsilon chains, while a peripheral stalk is formed by the delta, b and b' chains.

Its subcellular location is the plastid. The protein resides in the chloroplast thylakoid membrane. In terms of biological role, f(1)F(0) ATP synthase produces ATP from ADP in the presence of a proton or sodium gradient. F-type ATPases consist of two structural domains, F(1) containing the extramembraneous catalytic core and F(0) containing the membrane proton channel, linked together by a central stalk and a peripheral stalk. During catalysis, ATP synthesis in the catalytic domain of F(1) is coupled via a rotary mechanism of the central stalk subunits to proton translocation. Component of the F(0) channel, it forms part of the peripheral stalk, linking F(1) to F(0). The polypeptide is ATP synthase subunit b, chloroplastic (Galdieria sulphuraria (Red alga)).